The primary structure comprises 140 residues: Large ribosomal subunit protein uL11 (140 aa).

The protein belongs to the universal ribosomal protein uL11 family. In terms of assembly, part of the ribosomal stalk of the 50S ribosomal subunit. Interacts with L10 and the large rRNA to form the base of the stalk. L10 forms an elongated spine to which L12 dimers bind in a sequential fashion forming a multimeric L10(L12)X complex. Post-translationally, one or more lysine residues are methylated.

In terms of biological role, forms part of the ribosomal stalk which helps the ribosome interact with GTP-bound translation factors. The polypeptide is Large ribosomal subunit protein uL11 (Dehalococcoides mccartyi (strain ATCC BAA-2266 / KCTC 15142 / 195) (Dehalococcoides ethenogenes (strain 195))).